The primary structure comprises 436 residues: Enolase (436 aa).

Glutamine 167 lines the (2R)-2-phosphoglycerate pocket. Glutamate 209 acts as the Proton donor in catalysis. Mg(2+)-binding residues include aspartate 246, glutamate 291, and aspartate 318. Positions 343, 372, 373, and 394 each coordinate (2R)-2-phosphoglycerate. The active-site Proton acceptor is lysine 343.

Belongs to the enolase family. In terms of assembly, component of the RNA degradosome, a multiprotein complex involved in RNA processing and mRNA degradation. Mg(2+) serves as cofactor.

It localises to the cytoplasm. Its subcellular location is the secreted. The protein localises to the cell surface. The enzyme catalyses (2R)-2-phosphoglycerate = phosphoenolpyruvate + H2O. It participates in carbohydrate degradation; glycolysis; pyruvate from D-glyceraldehyde 3-phosphate: step 4/5. Functionally, catalyzes the reversible conversion of 2-phosphoglycerate (2-PG) into phosphoenolpyruvate (PEP). It is essential for the degradation of carbohydrates via glycolysis. This chain is Enolase, found in Haemophilus influenzae (strain PittGG).